Reading from the N-terminus, the 478-residue chain is Transposase for insertion sequence element IS231D (478 aa).

Belongs to the transposase 11 family.

Involved in the transposition of the insertion sequence. In Bacillus thuringiensis subsp. finitimus, this protein is Transposase for insertion sequence element IS231D.